Consider the following 378-residue polypeptide: Protein RecA (378 aa).

79–86 (GPESSGKT) contributes to the ATP binding site.

The protein belongs to the RecA family.

It localises to the cytoplasm. In terms of biological role, can catalyze the hydrolysis of ATP in the presence of single-stranded DNA, the ATP-dependent uptake of single-stranded DNA by duplex DNA, and the ATP-dependent hybridization of homologous single-stranded DNAs. It interacts with LexA causing its activation and leading to its autocatalytic cleavage. The polypeptide is Protein RecA (Streptococcus pyogenes serotype M49 (strain NZ131)).